We begin with the raw amino-acid sequence, 620 residues long: Sorbicillinoid biosynthetic cluster transcription factor 1 (620 aa).

Positions 10–37 (CEECRRRKARCDRVRPQCGICADAGRTC) form a DNA-binding region, zn(2)-C6 fungal-type. The tract at residues 285–308 (HDDETSPNENSGSCPSVSPSTTQN) is disordered. The segment covering 291-308 (PNENSGSCPSVSPSTTQN) has biased composition (polar residues).

The protein resides in the nucleus. Functionally, transcription factor that acts as the main regulator of the gene cluster that mediates the biosynthesis of sorbicillinoids, a diverse group of yellow secondary metabolites that restrict growth of competing pathogenic fungi but not of bacteria. This Penicillium rubens (strain ATCC 28089 / DSM 1075 / NRRL 1951 / Wisconsin 54-1255) (Penicillium chrysogenum) protein is Sorbicillinoid biosynthetic cluster transcription factor 1.